The primary structure comprises 347 residues: GMP reductase (347 aa).

Position 108–131 (108–131 (ADFEKTKQILDLNPALNFVCIDVA)) interacts with NADP(+). K(+) contacts are provided by Gly181 and Gly183. Catalysis depends on Cys186, which acts as the Thioimidate intermediate. Residue 216-239 (IVSDGGCTTPGDVAKAFGGGADFV) coordinates NADP(+).

This sequence belongs to the IMPDH/GMPR family. GuaC type 1 subfamily. In terms of assembly, homotetramer.

It carries out the reaction IMP + NH4(+) + NADP(+) = GMP + NADPH + 2 H(+). Its function is as follows. Catalyzes the irreversible NADPH-dependent deamination of GMP to IMP. It functions in the conversion of nucleobase, nucleoside and nucleotide derivatives of G to A nucleotides, and in maintaining the intracellular balance of A and G nucleotides. This is GMP reductase from Shigella flexneri.